A 117-amino-acid polypeptide reads, in one-letter code: Appetite-regulating hormone (117 aa).

The first 23 residues, 1 to 23, serve as a signal peptide directing secretion; it reads MVSSATICSLLLLSMLWMDMAMA. A lipid anchor (O-decanoyl serine; alternate) is attached at Ser26. Ser26 carries O-hexanoyl serine; alternate lipidation. The O-octanoyl serine; alternate moiety is linked to residue Ser26. The disordered stretch occupies residues 28 to 68; it reads LSPEHQKAQQRKESKKPPAKLQPRALEGWLHPEDRGQAEEA. Residues 31 to 43 are compositionally biased toward basic and acidic residues; the sequence is EHQKAQQRKESKK. Positions 52–75 are cleaved as a propeptide — removed in mature form; that stretch reads ALEGWLHPEDRGQAEEAEEELEIR. Leucine amide is present on Leu98. A propeptide spans 99-117 (removed in mature form); it reads GKFLQDILWEEVKEAPANK.

It belongs to the motilin family. Post-translationally, O-octanoylated by GOAT/MBOAT4. O-octanoylation is essential for ghrelin activity. The replacement of Ser-26 by aromatic tryptophan preserves ghrelin activity. Amidation of Leu-98 is essential for obestatin activity. Ghrelin is broadly expressed with higher expression in the stomach. Very low levels are detected in the hypothalamus, heart, lung, pancreas, intestine and adipose tissue. Obestatin is most highly expressed in jejunum, and also found in duodenum, stomach, pituitary, ileum, liver, hypothalamus and heart. Expressed in low levels in pancreas, cerebellum, cerebrum, kidney, testis, ovary colon and lung.

Its subcellular location is the secreted. Functionally, ghrelin is the ligand for growth hormone secretagogue receptor type 1 (GHSR). Induces the release of growth hormone from the pituitary. Has an appetite-stimulating effect, induces adiposity and stimulates gastric acid secretion. Involved in growth regulation. In terms of biological role, obestatin may be the ligand for GPR39. May have an appetite-reducing effect resulting in decreased food intake. May reduce gastric emptying activity and jejunal motility. In Rattus norvegicus (Rat), this protein is Appetite-regulating hormone (Ghrl).